A 452-amino-acid polypeptide reads, in one-letter code: MPKARAKKSEQTRRYDKNVIKAAQFDISPRDFSRNALNVVEKLQRQGFEAYIVGGCIRDLLLGKKPKDFDVATNARPEQIQNIFQRQCRLVGRRFRLAHIMFGRDIIEVATFRANHSDARNENQAKQSNEGMLLRDNVYGTIEQDAARRDFTVNALYYNPQDNTLRDYFEGIKDLKAGKLRLIGDPVTRYQEDPVRMLRSIRFMAKLDMFLEKPSEQPIRELAPLLKNIPPARLFDESLKLLQAGQGVKTYRLLRQYGLFEQLFPALSAYFTEKEDSFAERMIVTALTSTDERVADKLRINPAFLFAAFFWYPLREKVEILKNEGGLNNHDAYALAGNEVLDLFCRALAAPRRHTAVIRDIWFLQLQLLKRTGSAPMRTMEHPKFRAGFDLLAMRAEIEGGETIELAKWWHEYQFSNGEQREQLIQEQQRLHPKPKKKYYRPRRRKTTCSAE.

Active-site residues include D68, D70, and D150. Positions 427–452 are disordered; that stretch reads EQQRLHPKPKKKYYRPRRRKTTCSAE. A compositionally biased stretch (basic residues) spans 431 to 452; the sequence is LHPKPKKKYYRPRRRKTTCSAE.

The protein belongs to the tRNA nucleotidyltransferase/poly(A) polymerase family.

It carries out the reaction RNA(n) + ATP = RNA(n)-3'-adenine ribonucleotide + diphosphate. Functionally, adds poly(A) tail to the 3' end of many RNAs, which usually targets these RNAs for decay. Plays a significant role in the global control of gene expression, through influencing the rate of transcript degradation, and in the general RNA quality control. The polypeptide is Poly(A) polymerase I (Haemophilus influenzae (strain ATCC 51907 / DSM 11121 / KW20 / Rd)).